A 127-amino-acid polypeptide reads, in one-letter code: Glycine cleavage system H protein (127 aa).

The region spanning 22-104 is the Lipoyl-binding domain; it reads KVRIGITDFA…YEKAWMIVVE (83 aa). Lysine 63 carries the N6-lipoyllysine modification.

It belongs to the GcvH family. The glycine cleavage system is composed of four proteins: P, T, L and H. (R)-lipoate serves as cofactor.

In terms of biological role, the glycine cleavage system catalyzes the degradation of glycine. The H protein shuttles the methylamine group of glycine from the P protein to the T protein. Its function is as follows. Is also involved in protein lipoylation via its role as an octanoyl/lipoyl carrier protein intermediate. This chain is Glycine cleavage system H protein, found in Bacillus licheniformis (strain ATCC 14580 / DSM 13 / JCM 2505 / CCUG 7422 / NBRC 12200 / NCIMB 9375 / NCTC 10341 / NRRL NRS-1264 / Gibson 46).